The primary structure comprises 503 residues: Catalase (503 aa).

The tract at residues 1–26 (MAKDDKRLTGLFGHPVSDRENSMTAG) is disordered. Active-site residues include His56 and Asn129. Residue Tyr339 participates in heme binding.

It belongs to the catalase family. As to quaternary structure, homodimer. Heme is required as a cofactor.

It catalyses the reaction 2 H2O2 = O2 + 2 H2O. Decomposes hydrogen peroxide into water and oxygen; serves to protect cells from the toxic effects of hydrogen peroxide. This is Catalase (katA) from Staphylococcus haemolyticus (strain JCSC1435).